A 619-amino-acid chain; its full sequence is 4-hydroxyphenylalkanoate adenylyltransferase (619 aa).

Belongs to the ATP-dependent AMP-binding enzyme family.

The enzyme catalyses 17-(4-hydroxyphenyl)heptadecanoate + holo-[(phenol)carboxyphthiodiolenone synthase] + ATP = 17-(4-hydroxyphenyl)heptadecanoyl-[(phenol)carboxyphthiodiolenone synthase] + AMP + diphosphate. The catalysed reaction is 19-(4-hydroxyphenyl)nonadecanoate + holo-[(phenol)carboxyphthiodiolenone synthase] + ATP = 19-(4-hydroxyphenyl)nonadecanoyl-[(phenol)carboxyphthiodiolenone synthase] + AMP + diphosphate. It participates in lipid metabolism; fatty acid biosynthesis. Functionally, catalyzes the activation of long-chain fatty acids as acyl-adenylates (acyl-AMP), which are then transferred to the multifunctional polyketide synthase PpsA for further chain extension. Involved in the biosynthesis of phenolphthiocerol, which is an important intermediate in the biosynthesis of phenolic glycolipid (PGL), also called mycosid B. This Mycobacterium bovis (strain ATCC BAA-935 / AF2122/97) protein is 4-hydroxyphenylalkanoate adenylyltransferase (fadD29).